The primary structure comprises 134 residues: Histone-like protein Rv3852 (134 aa).

A compositionally biased stretch (basic and acidic residues) spans 1-10; it reads MPDPQDRPDS. Positions 1–68 are disordered; that stretch reads MPDPQDRPDS…PAEAPVSLQQ (68 aa). Positions 23–48 are enriched in basic residues; the sequence is LPAKKAAKKAPARKTPAKKAPAKKTP. The chain crosses the membrane as a helical span at residues 111–128; the sequence is PVPLIVAVTLSLLALLLI.

Homodimer in solution. Is probably able to self-associate in higher oligomers along the DNA molecules. Interacts with the N-terminal region of Wag31.

The protein resides in the cell inner membrane. With respect to regulation, can interact directly in vitro with the compound agrimophol, a phloroglucinol from the A.pilosa plant, whose extracts have been used in traditional Chinese medicine to treat pulmonary infections. Interaction with agrimophol leads to disruption of Rv3852's DNA binding function. Its function is as follows. Binds DNA in vitro. It has been proposed that Rv3852 plays a role in nucleoid organization and may function as an anchorage to tether the DNA to the membrane. However, it was later shown that it has no influence on nucleoid shape or compaction. It plays no role in virulence and only a minor role in the control of transcription, and does not appear to function as a typical nucleoid-associated protein. Functionally, interacts with Wag31, an important cell shape and cell wall integrity determinant, and facilitates the localization of Wag31 to the cell poles and the cell wall, thus enabling nascent peptidoglycan synthesis. This chain is Histone-like protein Rv3852, found in Mycobacterium tuberculosis (strain ATCC 25618 / H37Rv).